We begin with the raw amino-acid sequence, 174 residues long: Co-chaperone protein HscB (174 aa).

One can recognise a J domain in the interval N2 to L74.

It belongs to the HscB family. Interacts with HscA and stimulates its ATPase activity. Interacts with IscU.

Co-chaperone involved in the maturation of iron-sulfur cluster-containing proteins. Seems to help targeting proteins to be folded toward HscA. This chain is Co-chaperone protein HscB, found in Buchnera aphidicola subsp. Acyrthosiphon pisum (strain 5A).